Consider the following 606-residue polypeptide: Phosphomethylpyrimidine synthase (606 aa).

The interval 84-103 (EPYPARSVKPEDNGLTSSPI) is disordered. Substrate-binding positions include asparagine 209, methionine 238, tyrosine 267, histidine 303, 323–325 (SRG), 364–367 (DGLR), and glutamate 403. Zn(2+) is bound at residue histidine 407. Tyrosine 430 lines the substrate pocket. Residue histidine 471 participates in Zn(2+) binding. [4Fe-4S] cluster contacts are provided by cysteine 551, cysteine 554, and cysteine 559.

Belongs to the ThiC family. Homodimer. It depends on [4Fe-4S] cluster as a cofactor.

The enzyme catalyses 5-amino-1-(5-phospho-beta-D-ribosyl)imidazole + S-adenosyl-L-methionine = 4-amino-2-methyl-5-(phosphooxymethyl)pyrimidine + CO + 5'-deoxyadenosine + formate + L-methionine + 3 H(+). Its pathway is cofactor biosynthesis; thiamine diphosphate biosynthesis. Functionally, catalyzes the synthesis of the hydroxymethylpyrimidine phosphate (HMP-P) moiety of thiamine from aminoimidazole ribotide (AIR) in a radical S-adenosyl-L-methionine (SAM)-dependent reaction. This is Phosphomethylpyrimidine synthase from Bartonella tribocorum (strain CIP 105476 / IBS 506).